Reading from the N-terminus, the 71-residue chain is Large ribosomal subunit protein bL31 (71 aa).

Residues Cys-16, Cys-18, Cys-37, and Cys-40 each coordinate Zn(2+).

The protein belongs to the bacterial ribosomal protein bL31 family. Type A subfamily. In terms of assembly, part of the 50S ribosomal subunit. The cofactor is Zn(2+).

Functionally, binds the 23S rRNA. The polypeptide is Large ribosomal subunit protein bL31 (Pectobacterium atrosepticum (strain SCRI 1043 / ATCC BAA-672) (Erwinia carotovora subsp. atroseptica)).